Here is a 70-residue protein sequence, read N- to C-terminus: Putative membrane protein insertion efficiency factor (70 aa).

This sequence belongs to the UPF0161 family.

It is found in the cell inner membrane. In terms of biological role, could be involved in insertion of integral membrane proteins into the membrane. The protein is Putative membrane protein insertion efficiency factor of Geobacter sp. (strain M21).